Reading from the N-terminus, the 390-residue chain is Malonyl-CoA-acyl carrier protein transacylase, mitochondrial (390 aa).

The N-terminal 21 residues, 1 to 21 (MSVRVARVAWVRGLGASYRRG), are a transit peptide targeting the mitochondrion. Catalysis depends on residues serine 153 and histidine 270. Lysine 314 is subject to N6-succinyllysine.

It belongs to the type II malonyltransferase family.

It is found in the mitochondrion. The catalysed reaction is holo-[ACP] + malonyl-CoA = malonyl-[ACP] + CoA. It participates in lipid metabolism; fatty acid biosynthesis. Functionally, catalyzes the transfer of a malonyl moiety from malonyl-CoA to the free thiol group of the phosphopantetheine arm of the mitochondrial ACP protein (NDUFAB1). This suggests the existence of the biosynthesis of fatty acids in mitochondria. Also acts as a mitochondrial small ribosomal subunit (mt-SSU) assembly factor. This is Malonyl-CoA-acyl carrier protein transacylase, mitochondrial from Homo sapiens (Human).